The chain runs to 334 residues: o-succinylbenzoate synthase (334 aa).

Lys107 serves as the catalytic Proton donor. Asp135, Glu162, and Asp185 together coordinate Mg(2+). The Proton acceptor role is filled by Lys209.

It belongs to the mandelate racemase/muconate lactonizing enzyme family. MenC type 1 subfamily. Requires a divalent metal cation as cofactor.

The catalysed reaction is (1R,6R)-6-hydroxy-2-succinyl-cyclohexa-2,4-diene-1-carboxylate = 2-succinylbenzoate + H2O. It functions in the pathway quinol/quinone metabolism; 1,4-dihydroxy-2-naphthoate biosynthesis; 1,4-dihydroxy-2-naphthoate from chorismate: step 4/7. The protein operates within quinol/quinone metabolism; menaquinone biosynthesis. In terms of biological role, converts 2-succinyl-6-hydroxy-2,4-cyclohexadiene-1-carboxylate (SHCHC) to 2-succinylbenzoate (OSB). The polypeptide is o-succinylbenzoate synthase (Mycobacterium leprae (strain TN)).